A 221-amino-acid chain; its full sequence is Deoxyribose-phosphate aldolase (221 aa).

The active-site Proton donor/acceptor is D91. K153 functions as the Schiff-base intermediate with acetaldehyde in the catalytic mechanism. K182 acts as the Proton donor/acceptor in catalysis.

It belongs to the DeoC/FbaB aldolase family. DeoC type 1 subfamily.

The protein resides in the cytoplasm. It catalyses the reaction 2-deoxy-D-ribose 5-phosphate = D-glyceraldehyde 3-phosphate + acetaldehyde. Its pathway is carbohydrate degradation; 2-deoxy-D-ribose 1-phosphate degradation; D-glyceraldehyde 3-phosphate and acetaldehyde from 2-deoxy-alpha-D-ribose 1-phosphate: step 2/2. Catalyzes a reversible aldol reaction between acetaldehyde and D-glyceraldehyde 3-phosphate to generate 2-deoxy-D-ribose 5-phosphate. This Clostridium botulinum (strain Eklund 17B / Type B) protein is Deoxyribose-phosphate aldolase.